Here is a 307-residue protein sequence, read N- to C-terminus: Phosphoribosylaminoimidazole-succinocarboxamide synthase (307 aa).

This sequence belongs to the SAICAR synthetase family.

It carries out the reaction 5-amino-1-(5-phospho-D-ribosyl)imidazole-4-carboxylate + L-aspartate + ATP = (2S)-2-[5-amino-1-(5-phospho-beta-D-ribosyl)imidazole-4-carboxamido]succinate + ADP + phosphate + 2 H(+). Its pathway is purine metabolism; IMP biosynthesis via de novo pathway; 5-amino-1-(5-phospho-D-ribosyl)imidazole-4-carboxamide from 5-amino-1-(5-phospho-D-ribosyl)imidazole-4-carboxylate: step 1/2. This is Phosphoribosylaminoimidazole-succinocarboxamide synthase from Thermobifida fusca (strain YX).